Here is a 483-residue protein sequence, read N- to C-terminus: Zinc metalloproteinase/disintegrin (483 aa).

The N-terminal stretch at 1 to 20 (MIQVLLVTICLAVFPYQGSS) is a signal peptide. The propeptide occupies 21–190 (IILESGNVND…KASQLYLTPE (170 aa)). The Peptidase M12B domain occupies 197 to 395 (RYIELAIVVD…RNPQCILNAP (199 aa)). Glu-200 is a Ca(2+) binding site. An N-linked (GlcNAc...) asparagine glycan is attached at Asn-263. Residue Asp-284 participates in Ca(2+) binding. Asn-293 is a glycosylation site (N-linked (GlcNAc...) asparagine). 3 disulfides stabilise this stretch: Cys-308/Cys-390, Cys-352/Cys-374, and Cys-354/Cys-357. Position 333 (His-333) interacts with Zn(2+). The active site involves Glu-334. Zn(2+)-binding residues include His-337 and His-343. Ca(2+) contacts are provided by Cys-390 and Asn-393. Positions 396 to 413 (LRTDTVSTPVSGNEFLEA) are excised as a propeptide. Residues 403–483 (TPVSGNEFLE…SNDCPRWNDL (81 aa)) enclose the Disintegrin domain. Cystine bridges form between Cys-417–Cys-432, Cys-419–Cys-427, Cys-426–Cys-449, Cys-440–Cys-446, Cys-445–Cys-470, and Cys-458–Cys-477. The Cell attachment site signature appears at 462–464 (RGD).

It belongs to the venom metalloproteinase (M12B) family. P-II subfamily. P-IIa sub-subfamily. As to quaternary structure, monomeric (disintegrin). It depends on Zn(2+) as a cofactor. Expressed by the venom gland.

Its subcellular location is the secreted. Its function is as follows. Impairs hemostasis in the envenomed animal. Inhibits platelet aggregation induced by ADP, thrombin, platelet-activating factor and collagen. Acts by inhibiting fibrinogen interaction with platelet receptors GPIIb/GPIIIa (ITGA2B/ITGB3). This chain is Zinc metalloproteinase/disintegrin, found in Protobothrops flavoviridis (Habu).